The chain runs to 916 residues: Oxysterol-binding protein 2 (916 aa).

3 disordered regions span residues 1-20 (MGKAAAPSRGGGCGGRSRGL), 34-121 (TAAP…PFTK), and 139-163 (PESGSLPALKPLPLLRPGQAKTPLG). Over residues 49–58 (EPKPQPQPVP) the composition is skewed to pro residues. The span at 79 to 92 (RSEPVSETTSEPEP) shows a compositional bias: low complexity. A compositionally biased stretch (polar residues) spans 99-113 (ELLQGSRPGSESSSG). The span at 144 to 155 (LPALKPLPLLRP) shows a compositional bias: low complexity. The PH domain occupies 182–274 (LDSFEGWLLK…WITALELAKA (93 aa)). Disordered stretches follow at residues 282-301 (THSDDSGDDDEATTPADKSE) and 417-448 (FHSAPGRPANPSKSFIEGSLLTPKGEDSEEDE). Position 287 is a phosphoserine (S287). S763 carries the post-translational modification Phosphoserine. The segment at 813–842 (EGVAPTDSRLRPDQRLMEKGRWDEANTEKQ) is disordered.

The protein belongs to the OSBP family. As to quaternary structure, interacts with CCDC159. In terms of tissue distribution, expressed mainly in retina, testis, and fetal liver.

The protein resides in the membrane. Its subcellular location is the cytoplasmic vesicle. It localises to the secretory vesicle. The protein localises to the acrosome. Its function is as follows. Binds 7-ketocholesterol. Acts during spermatid development where its function is required prior to the removal of cytoplasm from the sperm head. This is Oxysterol-binding protein 2 (OSBP2) from Homo sapiens (Human).